Consider the following 153-residue polypeptide: uncharacterized protein (153 aa).

A signal peptide spans 1–22 (MKAFNKLFSLVVASVLVFSLAG). Residue Cys23 is the site of N-palmitoyl cysteine attachment. Cys23 carries the S-diacylglycerol cysteine lipid modification.

This sequence to L.monocytogenes lmo0207.

The protein resides in the cell membrane. This is an uncharacterized protein from Escherichia coli (strain K12).